The following is a 425-amino-acid chain: Tyrosine--tRNA ligase (425 aa).

Tyrosine 37 is a binding site for L-tyrosine. Residues proline 42 to histidine 51 carry the 'HIGH' region motif. Tyrosine 174 and glutamine 178 together coordinate L-tyrosine. The 'KMSKS' region signature appears at lysine 234 to serine 238. An ATP-binding site is contributed by lysine 237. An S4 RNA-binding domain is found at aspartate 357–valine 422.

This sequence belongs to the class-I aminoacyl-tRNA synthetase family. TyrS type 1 subfamily. As to quaternary structure, homodimer.

Its subcellular location is the cytoplasm. The enzyme catalyses tRNA(Tyr) + L-tyrosine + ATP = L-tyrosyl-tRNA(Tyr) + AMP + diphosphate + H(+). Functionally, catalyzes the attachment of tyrosine to tRNA(Tyr) in a two-step reaction: tyrosine is first activated by ATP to form Tyr-AMP and then transferred to the acceptor end of tRNA(Tyr). In Laribacter hongkongensis (strain HLHK9), this protein is Tyrosine--tRNA ligase.